We begin with the raw amino-acid sequence, 388 residues long: Succinyl-diaminopimelate desuccinylase (388 aa).

His-74 contacts Zn(2+). Asp-76 is a catalytic residue. Residue Asp-107 coordinates Zn(2+). Glu-142 functions as the Proton acceptor in the catalytic mechanism. Glu-143, Glu-171, and His-360 together coordinate Zn(2+).

The protein belongs to the peptidase M20A family. DapE subfamily. In terms of assembly, homodimer. The cofactor is Zn(2+). It depends on Co(2+) as a cofactor.

It carries out the reaction N-succinyl-(2S,6S)-2,6-diaminopimelate + H2O = (2S,6S)-2,6-diaminopimelate + succinate. Its pathway is amino-acid biosynthesis; L-lysine biosynthesis via DAP pathway; LL-2,6-diaminopimelate from (S)-tetrahydrodipicolinate (succinylase route): step 3/3. Its function is as follows. Catalyzes the hydrolysis of N-succinyl-L,L-diaminopimelic acid (SDAP), forming succinate and LL-2,6-diaminopimelate (DAP), an intermediate involved in the bacterial biosynthesis of lysine and meso-diaminopimelic acid, an essential component of bacterial cell walls. The protein is Succinyl-diaminopimelate desuccinylase of Rhodopseudomonas palustris (strain BisB5).